The primary structure comprises 523 residues: NADH-ubiquinone oxidoreductase chain 2 (523 aa).

The next 14 membrane-spanning stretches (helical) occupy residues 3–23 (LFGVLTMILAIALFSLRIPAI), 30–50 (IILLLFSALLSYNSLYMNNIG), 62–82 (VTTITQSIDVFIYLLGALVLL), 110–130 (SVLAEYPLIALFSVLGMSSLI), 135–155 (LISMFLSIELQSFAVYILATI), 170–190 (FLLGSLSSALILLGSSLLYSF), 212–232 (IEISVLLIMVGLLFKVSAAPF), 246–266 (VVTTWLTTMPKIAFLVFILEF), 281–301 (LLLISSLLSLLIGTIGGLAQY), 306–326 (LLTYSTISHVGFLLLALAINN), 333–353 (FLFYLIQYSLTNINVFFILVA), 386–406 (GLSLAICLFSMAGIPPLVGFF), 419–439 (GNFFLAFVAILVSVVSAAYYL), and 490–510 (LVIATITLLLIFFIINPTPLL).

The protein belongs to the complex I subunit 2 family.

The protein localises to the mitochondrion inner membrane. It catalyses the reaction a ubiquinone + NADH + 5 H(+)(in) = a ubiquinol + NAD(+) + 4 H(+)(out). Functionally, core subunit of the mitochondrial membrane respiratory chain NADH dehydrogenase (Complex I) that is believed to belong to the minimal assembly required for catalysis. Complex I functions in the transfer of electrons from NADH to the respiratory chain. The immediate electron acceptor for the enzyme is believed to be ubiquinone. This chain is NADH-ubiquinone oxidoreductase chain 2, found in Rhizopus oryzae (Mucormycosis agent).